Consider the following 475-residue polypeptide: Ribulose bisphosphate carboxylase large chain (475 aa).

Positions 1–2 (MS) are excised as a propeptide. Position 3 is an N-acetylproline (P3). K14 bears the N6,N6,N6-trimethyllysine mark. Substrate contacts are provided by N123 and T173. Catalysis depends on K175, which acts as the Proton acceptor. K177 provides a ligand contact to substrate. The Mg(2+) site is built by K201, D203, and E204. K201 bears the N6-carboxylysine mark. H294 acts as the Proton acceptor in catalysis. Substrate is bound by residues R295, H327, and S379.

Belongs to the RuBisCO large chain family. Type I subfamily. In terms of assembly, heterohexadecamer of 8 large chains and 8 small chains; disulfide-linked. The disulfide link is formed within the large subunit homodimers. Requires Mg(2+) as cofactor. The disulfide bond which can form in the large chain dimeric partners within the hexadecamer appears to be associated with oxidative stress and protein turnover.

It is found in the plastid. The protein localises to the chloroplast. The enzyme catalyses 2 (2R)-3-phosphoglycerate + 2 H(+) = D-ribulose 1,5-bisphosphate + CO2 + H2O. It carries out the reaction D-ribulose 1,5-bisphosphate + O2 = 2-phosphoglycolate + (2R)-3-phosphoglycerate + 2 H(+). Functionally, ruBisCO catalyzes two reactions: the carboxylation of D-ribulose 1,5-bisphosphate, the primary event in carbon dioxide fixation, as well as the oxidative fragmentation of the pentose substrate in the photorespiration process. Both reactions occur simultaneously and in competition at the same active site. This chain is Ribulose bisphosphate carboxylase large chain, found in Pinus balfouriana (Foxtail pine).